A 214-amino-acid chain; its full sequence is Predicted GPI-anchored protein 57 (214 aa).

A signal peptide spans 1-18 (MLFTQLIILFTFISQIIC). The interval 36-101 (RGSSGHSSGG…SSGSSSGSRN (66 aa)) is disordered. Positions 42 to 60 (SSGGGHSSSGSHSSGGGHS) are enriched in gly residues. Residues 76 to 85 (SGSSSGSSSG) show a composition bias toward low complexity. Asn-182 is a glycosylation site (N-linked (GlcNAc...) asparagine). A lipid anchor (GPI-anchor amidated glycine) is attached at Gly-191. The propeptide at 192-214 (VSLNIPSTHFYVIGLAAAYSIVL) is removed in mature form.

Belongs to the PGA37 family.

The protein localises to the secreted. It localises to the cell membrane. Predicted GPI-anchored protein which may have a role during host infection. In Candida albicans (strain SC5314 / ATCC MYA-2876) (Yeast), this protein is Predicted GPI-anchored protein 57 (PGA57).